We begin with the raw amino-acid sequence, 362 residues long: Porin Omp2b (362 aa).

Residues 1–22 (MNIKSLLLGSAAALVAASGAQA) form the signal peptide.

Belongs to the alphaproteobacteria porin family. Homotrimer.

The protein localises to the cell outer membrane. Its function is as follows. Forms passive diffusion pores that allow small molecular weight hydrophilic materials across the outer membrane. The protein is Porin Omp2b (omp2b) of Brucella suis biovar 1 (strain 1330).